The primary structure comprises 172 residues: NADH-quinone oxidoreductase subunit B (172 aa).

The [4Fe-4S] cluster site is built by Cys-46, Cys-47, Cys-111, and Cys-141.

It belongs to the complex I 20 kDa subunit family. NDH-1 is composed of 14 different subunits. Subunits NuoB, C, D, E, F, and G constitute the peripheral sector of the complex. [4Fe-4S] cluster is required as a cofactor.

It is found in the cell membrane. The enzyme catalyses a quinone + NADH + 5 H(+)(in) = a quinol + NAD(+) + 4 H(+)(out). In terms of biological role, NDH-1 shuttles electrons from NADH, via FMN and iron-sulfur (Fe-S) centers, to quinones in the respiratory chain. The immediate electron acceptor for the enzyme in this species is believed to be a menaquinone. Couples the redox reaction to proton translocation (for every two electrons transferred, four hydrogen ions are translocated across the cytoplasmic membrane), and thus conserves the redox energy in a proton gradient. In Bacillus mycoides (strain KBAB4) (Bacillus weihenstephanensis), this protein is NADH-quinone oxidoreductase subunit B.